A 1300-amino-acid polypeptide reads, in one-letter code: uncharacterized protein (1300 aa).

Positions 1-26 (MGYKLKRWPLVAFTFTGIGLGVVLAA) are cleaved as a signal peptide. Cysteine 27 carries N-palmitoyl cysteine lipidation. Cysteine 27 carries S-diacylglycerol cysteine lipidation. Residues 464-478 (AMAAASTGADSSSGT) are compositionally biased toward low complexity. Disordered stretches follow at residues 464-487 (AMAA…SGGN), 620-639 (ASVS…DTQE), 774-797 (DSQK…NDKK), and 1244-1269 (KMSD…SPRT). 2 stretches are compositionally biased toward polar residues: residues 620–637 (ASVS…STDT) and 774–783 (DSQKSTNTVK). Residues 785 to 797 (PDIKPTRENNDKK) show a composition bias toward basic and acidic residues. Residues 1257–1269 (TIRKPKPHHSPRT) are compositionally biased toward basic residues.

It belongs to the MG307/MG309/MG338 family.

Its subcellular location is the cell membrane. This is an uncharacterized protein from Mycoplasma pneumoniae (strain ATCC 29342 / M129 / Subtype 1) (Mycoplasmoides pneumoniae).